Consider the following 208-residue polypeptide: Imidazole glycerol phosphate synthase subunit HisH (208 aa).

The 206-residue stretch at 1–206 (MIVIIDYDTG…KEVIRSCKSS (206 aa)) folds into the Glutamine amidotransferase type-1 domain. Catalysis depends on Cys-79, which acts as the Nucleophile. Residues His-181 and Glu-183 contribute to the active site.

Heterodimer of HisH and HisF.

It is found in the cytoplasm. The catalysed reaction is 5-[(5-phospho-1-deoxy-D-ribulos-1-ylimino)methylamino]-1-(5-phospho-beta-D-ribosyl)imidazole-4-carboxamide + L-glutamine = D-erythro-1-(imidazol-4-yl)glycerol 3-phosphate + 5-amino-1-(5-phospho-beta-D-ribosyl)imidazole-4-carboxamide + L-glutamate + H(+). It catalyses the reaction L-glutamine + H2O = L-glutamate + NH4(+). It participates in amino-acid biosynthesis; L-histidine biosynthesis; L-histidine from 5-phospho-alpha-D-ribose 1-diphosphate: step 5/9. Functionally, IGPS catalyzes the conversion of PRFAR and glutamine to IGP, AICAR and glutamate. The HisH subunit catalyzes the hydrolysis of glutamine to glutamate and ammonia as part of the synthesis of IGP and AICAR. The resulting ammonia molecule is channeled to the active site of HisF. The protein is Imidazole glycerol phosphate synthase subunit HisH of Listeria monocytogenes serotype 4b (strain CLIP80459).